A 159-amino-acid polypeptide reads, in one-letter code: Transcriptional repressor NrdR (159 aa).

Residues 3 to 34 (CPFCHTPDTSVIDSRVSEEGDRIRRRRRCPHC) fold into a zinc finger. Residues 49 to 139 (PQVVKQDGNR…VYRSFQGAAD (91 aa)) form the ATP-cone domain.

This sequence belongs to the NrdR family. It depends on Zn(2+) as a cofactor.

In terms of biological role, negatively regulates transcription of bacterial ribonucleotide reductase nrd genes and operons by binding to NrdR-boxes. The sequence is that of Transcriptional repressor NrdR from Nitrosospira multiformis (strain ATCC 25196 / NCIMB 11849 / C 71).